The sequence spans 258 residues: UPF0246 protein Pnec_1068 (258 aa).

This sequence belongs to the UPF0246 family.

In Polynucleobacter necessarius subsp. necessarius (strain STIR1), this protein is UPF0246 protein Pnec_1068.